The following is a 252-amino-acid chain: Hydroxyacylglutathione hydrolase (252 aa).

The Zn(2+) site is built by histidine 54, histidine 56, aspartate 58, histidine 59, histidine 113, aspartate 132, and histidine 170.

The protein belongs to the metallo-beta-lactamase superfamily. Glyoxalase II family. In terms of assembly, monomer. It depends on Zn(2+) as a cofactor.

The enzyme catalyses an S-(2-hydroxyacyl)glutathione + H2O = a 2-hydroxy carboxylate + glutathione + H(+). Its pathway is secondary metabolite metabolism; methylglyoxal degradation; (R)-lactate from methylglyoxal: step 2/2. Its function is as follows. Thiolesterase that catalyzes the hydrolysis of S-D-lactoyl-glutathione to form glutathione and D-lactic acid. The polypeptide is Hydroxyacylglutathione hydrolase (Thermosynechococcus vestitus (strain NIES-2133 / IAM M-273 / BP-1)).